A 178-amino-acid polypeptide reads, in one-letter code: Acireductone dioxygenase 1 (178 aa).

4 residues coordinate Fe(2+): His84, His86, Glu90, and His130. Residues His84, His86, Glu90, and His130 each contribute to the Ni(2+) site.

It belongs to the acireductone dioxygenase (ARD) family. Fe(2+) is required as a cofactor. It depends on Ni(2+) as a cofactor.

The protein localises to the cytoplasm. It localises to the nucleus. It carries out the reaction 1,2-dihydroxy-5-(methylsulfanyl)pent-1-en-3-one + O2 = 4-methylsulfanyl-2-oxobutanoate + formate + 2 H(+). It catalyses the reaction 1,2-dihydroxy-5-(methylsulfanyl)pent-1-en-3-one + O2 = 3-(methylsulfanyl)propanoate + CO + formate + 2 H(+). It participates in amino-acid biosynthesis; L-methionine biosynthesis via salvage pathway; L-methionine from S-methyl-5-thio-alpha-D-ribose 1-phosphate: step 5/6. Its function is as follows. Catalyzes 2 different reactions between oxygen and the acireductone 1,2-dihydroxy-3-keto-5-methylthiopentene (DHK-MTPene) depending upon the metal bound in the active site. Fe-containing acireductone dioxygenase (Fe-ARD) produces formate and 2-keto-4-methylthiobutyrate (KMTB), the alpha-ketoacid precursor of methionine in the methionine recycle pathway. Ni-containing acireductone dioxygenase (Ni-ARD) produces methylthiopropionate, carbon monoxide and formate, and does not lie on the methionine recycle pathway. This Coprinopsis cinerea (strain Okayama-7 / 130 / ATCC MYA-4618 / FGSC 9003) (Inky cap fungus) protein is Acireductone dioxygenase 1.